We begin with the raw amino-acid sequence, 562 residues long: Nucleoprotein (562 aa).

A binding site for the cap structure m7GTP region spans residues 54-237; the sequence is LRKTKRTDGD…ITKDESAINI (184 aa). Mn(2+) is bound by residues aspartate 381 and glutamate 383. Residues glutamate 391, cysteine 498, histidine 501, and cysteine 523 each contribute to the Zn(2+) site. Mn(2+) is bound at residue aspartate 527.

Belongs to the arenaviridae nucleocapsid protein family. In terms of assembly, homomultimerizes to form the nucleocapsid. Binds to viral genomic RNA. Interacts with glycoprotein G2. Interacts with protein Z; this interaction probably directs the encapsidated genome to budding sites. Interacts with protein L; this interaction does not interfere with Z-L interaction. Interacts with host IKBKE (via Protein kinase domain); the interaction inhibits IKBKE kinase activity.

The protein resides in the virion. It localises to the host cytoplasm. In terms of biological role, encapsidates the genome, protecting it from nucleases. The encapsidated genomic RNA is termed the nucleocapsid (NC). Serves as template for viral transcription and replication. The increased presence of protein N in host cell does not seem to trigger the switch from transcription to replication as observed in other negative strain RNA viruses. Through the interaction with host IKBKE, strongly inhibits the phosphorylation and nuclear translocation of host IRF3, a protein involved in interferon activation pathway, leading to the inhibition of interferon-beta and IRF3-dependent promoters activation. Also encodes a functional 3'-5' exoribonuclease that degrades preferentially dsRNA substrates and thereby participates in the suppression of interferon induction. This Homo sapiens (Human) protein is Nucleoprotein.